Here is a 658-residue protein sequence, read N- to C-terminus: Alkyldihydroxyacetonephosphate synthase, peroxisomal (658 aa).

2 disordered regions span residues 1 to 41 and 63 to 86; these read MAEA…LRVL and AASAATAAPTATPAAQESGTIPKK. Residues 1–58 constitute a peroxisome transit peptide; sequence MAEAAAAAGGTGLGAGASYGSAADRDRDPDPDRAGRRLRVLSGHLLGRPREALSTNEC. Residues 23–35 are compositionally biased toward basic and acidic residues; that stretch reads ADRDRDPDPDRAG. A compositionally biased stretch (low complexity) spans 63-77; that stretch reads AASAATAAPTATPAA. Serine 65 is subject to Phosphoserine. Threonine 74 carries the phosphothreonine modification. Lysine 102 carries the N6-acetyllysine modification. Positions 202–384 constitute an FAD-binding PCMH-type domain; that stretch reads FERIPDIVLW…TEATIKIRPV (183 aa). FAD contacts are provided by residues 234 to 240, 303 to 309, and 316 to 319; these read PIGGGTS, DSLEFST, and TRAS. Lysine 347 carries the N6-acetyllysine modification. FAD is bound at residue 368-374; the sequence is EGTLGVI. Arginine 515 contributes to the substrate binding site. Catalysis depends on tyrosine 578, which acts as the Proton donor/acceptor. Important for enzyme activity regions lie at residues 615 to 617 and 654 to 658; these read HHH and NRNLL.

It belongs to the FAD-binding oxidoreductase/transferase type 4 family. As to quaternary structure, homodimer. It depends on FAD as a cofactor.

It localises to the peroxisome membrane. Its subcellular location is the peroxisome. The enzyme catalyses a long chain fatty alcohol + a 1-acylglycerone 3-phosphate = a 1-O-alkylglycerone 3-phosphate + a long-chain fatty acid + H(+). It carries out the reaction hexadecan-1-ol + 1-hexadecanoylglycerone 3-phosphate = 1-O-hexadecylglycerone 3-phosphate + hexadecanoate + H(+). The catalysed reaction is 1-hexadecanoylglycerone 3-phosphate + a long-chain fatty acid = a 1-acylglycerone 3-phosphate + hexadecanoate. It functions in the pathway glycerolipid metabolism; ether lipid biosynthesis. In terms of biological role, catalyzes the exchange of the acyl chain in acyl-dihydroxyacetonephosphate (acyl-DHAP) for a long chain fatty alcohol, yielding the first ether linked intermediate, i.e. alkyl-dihydroxyacetonephosphate (alkyl-DHAP), in the pathway of ether lipid biosynthesis. This Homo sapiens (Human) protein is Alkyldihydroxyacetonephosphate synthase, peroxisomal (AGPS).